Here is a 506-residue protein sequence, read N- to C-terminus: Sodium-coupled neutral amino acid symporter 2 (506 aa).

The interval 1–23 (MKKAEMGRFNISPDEDSSSYSSN) is disordered. The Cytoplasmic segment spans residues 1-76 (MKKAEMGRFN…HPGTTSFGMS (76 aa)). The regulates protein turnover upon amino acid deprivation stretch occupies residues 1 to 96 (MKKAEMGRFN…SGILGLSYAM (96 aa)). A phosphoserine mark is found at serine 12, serine 21, serine 22, and serine 55. A helical transmembrane segment spans residues 77 to 96 (VFNLSNAIVGSGILGLSYAM). Asparagine 82 contacts Na(+). Over 97–102 (ANTGIA) the chain is Extracellular. A helical membrane pass occupies residues 103–123 (LFIILLTFVSIFSLYSVHLLL). The Cytoplasmic segment spans residues 124–158 (KTANEGGSLLYEQLGHKAFGMVGKLTASGSITMQN). The helical transmembrane segment at 159–177 (IGAMSSYLFIVKYELPLVI) threads the bilayer. Over 178–188 (QALMNIEDTNG) the chain is Extracellular. Residues 189–209 (LWYLNGDYLVLLVSLVLILPL) traverse the membrane as a helical segment. The Cytoplasmic portion of the chain corresponds to 210 to 217 (SLLRNLGY). A helical transmembrane segment spans residues 218 to 238 (LGYTSGLSLLCMMFFLIVVIF). Residues 239–292 (KKFQISCPAEIAFLVNETVNSSLTQPATFLPDMGFNRTESDSCQPRYFIFNSQT) lie on the Extracellular side of the membrane. Cysteine 245 and cysteine 281 are joined by a disulfide. N-linked (GlcNAc...) asparagine glycans are attached at residues asparagine 258 and asparagine 274. A helical membrane pass occupies residues 293-313 (VYAVPILTFSFVCHPAILPIY). Topologically, residues 314–329 (EELKGRSRRRMMNVSK) are cytoplasmic. The helical transmembrane segment at 330-350 (ISFFAMFLMYLLAALFGYLTF) threads the bilayer. At 351-371 (YGHVESELLHTYSSVMETDIL) the chain is on the extracellular side. Residues 372–392 (LLIVRLAVLVAVTLTVPVVIF) form a helical membrane-spanning segment. Position 386 (threonine 386) interacts with Na(+). The Cytoplasmic segment spans residues 393–413 (PIRSSITHLLCASKEFSWWRH). A helical membrane pass occupies residues 414–434 (SVITVSILVFTNLLVIFVPNI). At 435-436 (RD) the chain is on the extracellular side. Residues 437 to 457 (IFGFIGASAAAMLIFILPSAF) traverse the membrane as a helical segment. Residues 458-472 (YIKLVKKEPMKSVQK) are Cytoplasmic-facing. The chain crosses the membrane as a helical span at residues 473–495 (IGAMFFLLSGIVVMTGSMALIVL). Residues 496-506 (DWVHNAPGGGH) lie on the Extracellular side of the membrane.

The protein belongs to the amino acid/polyamine transporter 2 family. Polyubiquitination by NEDD4L regulates the degradation and the activity of SLC38A2.

The protein resides in the cell membrane. It carries out the reaction L-alanine(in) + Na(+)(in) = L-alanine(out) + Na(+)(out). It catalyses the reaction glycine(in) + Na(+)(in) = glycine(out) + Na(+)(out). The enzyme catalyses L-serine(in) + Na(+)(in) = L-serine(out) + Na(+)(out). The catalysed reaction is L-proline(in) + Na(+)(in) = L-proline(out) + Na(+)(out). It carries out the reaction L-methionine(in) + Na(+)(in) = L-methionine(out) + Na(+)(out). It catalyses the reaction L-histidine(in) + Na(+)(in) = L-histidine(out) + Na(+)(out). The enzyme catalyses L-asparagine(in) + Na(+)(in) = L-asparagine(out) + Na(+)(out). The catalysed reaction is L-glutamine(in) + Na(+)(in) = L-glutamine(out) + Na(+)(out). It carries out the reaction L-threonine(in) + Na(+)(in) = L-threonine(out) + Na(+)(out). It catalyses the reaction L-leucine(in) + Na(+)(in) = L-leucine(out) + Na(+)(out). The enzyme catalyses L-phenylalanine(in) + Na(+)(in) = L-phenylalanine(out) + Na(+)(out). With respect to regulation, inhibited by N-methyl-D-glucamine. Inhibited by choline. Allosteric regulation of sodium ions binding by pH. Functionally, symporter that cotransports neutral amino acids and sodium ions from the extracellular to the intracellular side of the cell membrane. The transport is pH-sensitive, Li(+)-intolerant, electrogenic, driven by the Na(+) electrochemical gradient and cotransports of neutral amino acids and sodium ions with a stoichiometry of 1:1. May function in the transport of amino acids at the blood-brain barrier. May function in the transport of amino acids in the supply of maternal nutrients to the fetus through the placenta. Maintains a key metabolic glutamine/glutamate balance underpinning retrograde signaling by dendritic release of the neurotransmitter glutamate. Transports L-proline in differentiating osteoblasts for the efficient synthesis of proline-enriched proteins and provides proline essential for osteoblast differentiation and bone formation during bone development. The chain is Sodium-coupled neutral amino acid symporter 2 from Bos taurus (Bovine).